The chain runs to 495 residues: Serine/threonine protein phosphatase 2A 57 kDa regulatory subunit B' alpha isoform (495 aa).

The segment covering methionine 1–alanine 13 has biased composition (basic residues). Disordered stretches follow at residues methionine 1–threonine 61 and glutamine 462–serine 495. Over residues valine 49–threonine 61 the composition is skewed to polar residues.

It belongs to the phosphatase 2A regulatory subunit B56 family. PP2A consists of a common heteromeric enzyme, composed of a catalytic subunit (subunits C), a constant regulatory subunit (subunit A), and a variety of regulatory subunits such as subunits B (the R2/B/PR55/B55, R3/B''/PR72/PR130/PR59 and R5/B'/B56 families). Interacts with BZR1. Interacts with BRI1. Interacts with SRK2E/OST1. In terms of tissue distribution, expressed ubiquitously, higher levels in leaves.

Its subcellular location is the nucleus. It is found in the cytoplasm. In terms of biological role, the B regulatory subunit may modulate substrate selectivity and catalytic activity, and may also direct the localization of the catalytic enzyme to a particular subcellular compartment. Required for the formation of the PP2A holoenzyme that positively regulates brassinosteroid signaling by dephosphorylating and activating BZR1. The sequence is that of Serine/threonine protein phosphatase 2A 57 kDa regulatory subunit B' alpha isoform (B'ALPHA) from Arabidopsis thaliana (Mouse-ear cress).